Consider the following 159-residue polypeptide: Ribosomal RNA large subunit methyltransferase H (159 aa).

S-adenosyl-L-methionine-binding positions include Leu76, Gly108, and 127 to 132 (FSNMTF).

The protein belongs to the RNA methyltransferase RlmH family. As to quaternary structure, homodimer.

It localises to the cytoplasm. The enzyme catalyses pseudouridine(1915) in 23S rRNA + S-adenosyl-L-methionine = N(3)-methylpseudouridine(1915) in 23S rRNA + S-adenosyl-L-homocysteine + H(+). In terms of biological role, specifically methylates the pseudouridine at position 1915 (m3Psi1915) in 23S rRNA. This Staphylococcus epidermidis (strain ATCC 35984 / DSM 28319 / BCRC 17069 / CCUG 31568 / BM 3577 / RP62A) protein is Ribosomal RNA large subunit methyltransferase H.